A 154-amino-acid chain; its full sequence is Myoglobin (154 aa).

The Globin domain occupies 2–148; it reads VLSEGEWQLV…FRKDIAAKYK (147 aa). At Ser-4 the chain carries Phosphoserine. A nitrite-binding site is contributed by His-65. O2 is bound at residue His-65. Thr-68 carries the post-translational modification Phosphothreonine. His-94 serves as a coordination point for heme b.

The protein belongs to the globin family. As to quaternary structure, monomeric.

The protein localises to the cytoplasm. Its subcellular location is the sarcoplasm. The enzyme catalyses Fe(III)-heme b-[protein] + nitric oxide + H2O = Fe(II)-heme b-[protein] + nitrite + 2 H(+). It carries out the reaction H2O2 + AH2 = A + 2 H2O. Its function is as follows. Monomeric heme protein which primary function is to store oxygen and facilitate its diffusion within muscle tissues. Reversibly binds oxygen through a pentacoordinated heme iron and enables its timely and efficient release as needed during periods of heightened demand. Depending on the oxidative conditions of tissues and cells, and in addition to its ability to bind oxygen, it also has a nitrite reductase activity whereby it regulates the production of bioactive nitric oxide. Under stress conditions, like hypoxia and anoxia, it also protects cells against reactive oxygen species thanks to its pseudoperoxidase activity. The sequence is that of Myoglobin (MB) from Physeter macrocephalus (Sperm whale).